A 718-amino-acid polypeptide reads, in one-letter code: Probable glycerol-3-phosphate acyltransferase, mitochondrial (718 aa).

An HXXXXD motif motif is present at residues 167-172; it reads HRSHLD. The chain crosses the membrane as a helical span at residues 409-425; that stretch reads MMCSISPVAVVSCLLLA.

The protein belongs to the GPAT/DAPAT family.

It localises to the mitochondrion membrane. The catalysed reaction is sn-glycerol 3-phosphate + an acyl-CoA = a 1-acyl-sn-glycero-3-phosphate + CoA. It participates in phospholipid metabolism; CDP-diacylglycerol biosynthesis; CDP-diacylglycerol from sn-glycerol 3-phosphate: step 1/3. The chain is Probable glycerol-3-phosphate acyltransferase, mitochondrial (acl-6) from Caenorhabditis elegans.